Consider the following 248-residue polypeptide: MAGHSQFKNIMHRKGRQDAMKSKLFGKLAREITVAAKLGTPDPAMNPRLRAAVVAARAENMPKDNIERAIKKALGGEGENYAEIRYEGYGPGGVAVIVEALTDNRNRAASDIRSFFTKSGGNLGETGSVSFMFDRVGIIEFDRSVASDDSVLDAAIEAGADDVISGEGGHEVYASPDSFHEVAKNLEAKFGEPRKAALTWKPQNTVAVDDETGEKLVKLMDLLNEHDDVQNVYANFEISDALMAKMGG.

This sequence belongs to the TACO1 family.

It is found in the cytoplasm. The sequence is that of Probable transcriptional regulatory protein BRADO1143 from Bradyrhizobium sp. (strain ORS 278).